The chain runs to 65 residues: Hainantoxin-X-3 (65 aa).

The first 20 residues, methionine 1–alanine 20, serve as a signal peptide directing secretion. Residues glutamate 21–arginine 37 constitute a propeptide that is removed on maturation. 2 disulfide bridges follow: cysteine 46/cysteine 59 and cysteine 55/cysteine 64.

The protein belongs to the neurotoxin 36 family. 02 subfamily. Expressed by the venom gland.

Its subcellular location is the secreted. Functionally, reversibly blocks N-type calcium channels (Cav2.2/CACNA1B) in rat dorsal root ganglion cells. Elicits no toxic symptoms in either vertebrates or invertebrates during a period of 48 hours post-injection, when it was assayed in vivo by direct injection into mice and cockroaches. The protein is Hainantoxin-X-3 of Cyriopagopus hainanus (Chinese bird spider).